A 224-amino-acid chain; its full sequence is 7-cyano-7-deazaguanine synthase (224 aa).

9 to 19 lines the ATP pocket; that stretch reads ISGGMDSTLCA. Positions 190, 198, 201, and 204 each coordinate Zn(2+).

This sequence belongs to the QueC family. Zn(2+) serves as cofactor.

The enzyme catalyses 7-carboxy-7-deazaguanine + NH4(+) + ATP = 7-cyano-7-deazaguanine + ADP + phosphate + H2O + H(+). It functions in the pathway purine metabolism; 7-cyano-7-deazaguanine biosynthesis. Its function is as follows. Catalyzes the ATP-dependent conversion of 7-carboxy-7-deazaguanine (CDG) to 7-cyano-7-deazaguanine (preQ(0)). The sequence is that of 7-cyano-7-deazaguanine synthase from Campylobacter jejuni subsp. jejuni serotype O:6 (strain 81116 / NCTC 11828).